The primary structure comprises 468 residues: Aspartate ammonia-lyase (468 aa).

Residues Thr99, Ser138, Thr139, Asn140, and Thr185 each coordinate L-aspartate. The interval 315 to 324 (GSSIMPGKVN) is SS loop. The active-site Proton acceptor is Ser316. L-aspartate-binding residues include Ser317 and Lys322.

Belongs to the class-II fumarase/aspartase family. Aspartase subfamily. Homotetramer.

The enzyme catalyses L-aspartate = fumarate + NH4(+). In terms of biological role, catalyzes the reversible conversion of L-aspartate to fumarate and ammonia. The protein is Aspartate ammonia-lyase (aspA) of Helicobacter pylori (strain ATCC 700392 / 26695) (Campylobacter pylori).